Here is a 951-residue protein sequence, read N- to C-terminus: Valine--tRNA ligase (951 aa).

The 'HIGH' region motif lies at 42 to 52; that stretch reads PNVTGSLHMGH. Positions 554–558 match the 'KMSKS' region motif; that stretch reads KMSKS. Residue lysine 557 coordinates ATP. Positions 882-951 form a coiled coil; the sequence is LIDKDAELAR…EEQKATIAAL (70 aa).

This sequence belongs to the class-I aminoacyl-tRNA synthetase family. ValS type 1 subfamily. Monomer.

It localises to the cytoplasm. It catalyses the reaction tRNA(Val) + L-valine + ATP = L-valyl-tRNA(Val) + AMP + diphosphate. In terms of biological role, catalyzes the attachment of valine to tRNA(Val). As ValRS can inadvertently accommodate and process structurally similar amino acids such as threonine, to avoid such errors, it has a 'posttransfer' editing activity that hydrolyzes mischarged Thr-tRNA(Val) in a tRNA-dependent manner. The chain is Valine--tRNA ligase from Vibrio vulnificus (strain CMCP6).